A 291-amino-acid polypeptide reads, in one-letter code: DNA N6-methyl adenine demethylase (291 aa).

Positions G85 to R256 constitute a Fe2OG dioxygenase domain. L171–Y173 is a binding site for 2-oxoglutarate. Fe cation contacts are provided by H184, D186, and H239.

Belongs to the alkB family. In terms of assembly, interacts with top-2; the interaction is required for localization of top-2 to DNA. Also interacts with mtss-1, his-24, ule-3, C18B2.3, pgl-1, ceh-93, mcm-4 and F37C4.5. It depends on Fe(2+) as a cofactor.

It localises to the nucleus. It catalyses the reaction an N(6)-methyl-2'-deoxyadenosine in DNA + 2-oxoglutarate + O2 = a 2'-deoxyadenosine in DNA + formaldehyde + succinate + CO2. Its function is as follows. Dioxygenase that specifically demethylates DNA methylated on the 6th position of adenine (N(6)-methyladenosine) DNA. N(6)-methyladenosine (m6A) DNA is involved in epigenetic transgenerational inheritance. Plays an essential role in DNA replication and repair in the germline during meiosis. Binds to components of the DNA replication machinery such as top-2, and directs their localization to DNA to control DNA replication. This is DNA N6-methyl adenine demethylase from Caenorhabditis elegans.